A 341-amino-acid chain; its full sequence is Anthranilate phosphoribosyltransferase (341 aa).

Residues glycine 85, 88–89 (GD), threonine 93, 95–98 (NIST), 113–121 (KHGNRSASG), and serine 125 contribute to the 5-phospho-alpha-D-ribose 1-diphosphate site. Anthranilate is bound at residue glycine 85. A Mg(2+)-binding site is contributed by serine 97. Asparagine 116 is a binding site for anthranilate. Arginine 171 contacts anthranilate. Residues aspartate 230 and glutamate 231 each contribute to the Mg(2+) site.

This sequence belongs to the anthranilate phosphoribosyltransferase family. In terms of assembly, homodimer. Mg(2+) serves as cofactor.

The enzyme catalyses N-(5-phospho-beta-D-ribosyl)anthranilate + diphosphate = 5-phospho-alpha-D-ribose 1-diphosphate + anthranilate. The protein operates within amino-acid biosynthesis; L-tryptophan biosynthesis; L-tryptophan from chorismate: step 2/5. Its function is as follows. Catalyzes the transfer of the phosphoribosyl group of 5-phosphorylribose-1-pyrophosphate (PRPP) to anthranilate to yield N-(5'-phosphoribosyl)-anthranilate (PRA). This is Anthranilate phosphoribosyltransferase from Prochlorococcus marinus (strain SARG / CCMP1375 / SS120).